A 331-amino-acid chain; its full sequence is Mucin-15 (331 aa).

A signal peptide spans 1-22 (MLTLAKIALISSLFISLPFARP). Residues 23-233 (QKQNPRRNVT…SDTPKENKNT (211 aa)) lie on the Extracellular side of the membrane. Residues Asn30, Asn44, Asn54, Asn59, Asn75, Asn84, Asn120, Asn136, Asn145, Asn152, Asn215, and Asn222 are each glycosylated (N-linked (GlcNAc...) asparagine). Polar residues predominate over residues 124–162 (ADANPLQVSEHSNSTNSPSPENFTWSLDNDTMNSPEDIS). The tract at residues 124–186 (ADANPLQVSE…VTPFTAEPTE (63 aa)) is disordered. A helical transmembrane segment spans residues 234-254 (GIVFGAILGAILGASLLSLVG). Topologically, residues 255-331 (YLLCGQRKTD…DAIPPLRPSI (77 aa)) are cytoplasmic. Positions 302–331 (AVSDSSMPEGGESLQDGIPMDAIPPLRPSI) are disordered.

Highly glycosylated (N- and O-linked carbohydrates).

Its subcellular location is the membrane. The chain is Mucin-15 (Muc15) from Mus musculus (Mouse).